Reading from the N-terminus, the 100-residue chain is Small ribosomal subunit protein uS14c (100 aa).

This sequence belongs to the universal ribosomal protein uS14 family. Part of the 30S ribosomal subunit.

It is found in the plastid. It localises to the chloroplast. Its function is as follows. Binds 16S rRNA, required for the assembly of 30S particles. This chain is Small ribosomal subunit protein uS14c, found in Platanus occidentalis (Sycamore).